The primary structure comprises 343 residues: 4-hydroxy-2-oxovalerate aldolase 4 (343 aa).

A Pyruvate carboxyltransferase domain is found at V8–T260. R16–D17 is a substrate binding site. D17 serves as a coordination point for Mn(2+). H20 (proton acceptor) is an active-site residue. 2 residues coordinate substrate: S170 and H199. Mn(2+) contacts are provided by H199 and H201. Y290 contributes to the substrate binding site.

Belongs to the 4-hydroxy-2-oxovalerate aldolase family.

It carries out the reaction (S)-4-hydroxy-2-oxopentanoate = acetaldehyde + pyruvate. In Dechloromonas aromatica (strain RCB), this protein is 4-hydroxy-2-oxovalerate aldolase 4.